Consider the following 252-residue polypeptide: Probable transcriptional regulatory protein Kole_1935 (252 aa).

The protein belongs to the TACO1 family.

The protein localises to the cytoplasm. The protein is Probable transcriptional regulatory protein Kole_1935 of Kosmotoga olearia (strain ATCC BAA-1733 / DSM 21960 / TBF 19.5.1).